A 612-amino-acid polypeptide reads, in one-letter code: uncharacterized protein (612 aa).

Its subcellular location is the plastid. The protein localises to the chloroplast. This is an uncharacterized protein from Pyropia yezoensis (Susabi-nori).